Consider the following 512-residue polypeptide: MQKNRKNVKKKLVLIIIDGLGLRFESQGNGFALAKTPVFDRLFQEYPNSLIAASGQEVGLPEGQMGNSEVGHLNIGAGFVVYTGISIINNALKTGKFFENEKFILAFRHSIKTGFPLQIMGLFSPGGVHSHQDHLFALIDFAANFGVKKLNLHLFGDGRDVGPKSIKPWIKMLNLKLKNYENYKIASISGRFYSMDRDKMFDRVELGYNALLGKAENTFTDPIDYVNFQYEKGVSDEFFEPAINLKVNKKDFLADDHPVIFFNFRPDRARQLSHLILQTDLYEQKPKNPIKTDVFVSMMKYEGINCLVAFEEMRVENPLGKLICMAGFRQLRLAETQKYAHVTFFVDGGVELELENSDRILIDSLKVQSYADFPQMSAVEITDKLLEVGQKYDFIIMNFANPDMVGHTGDLKATIKAVEILDFQIGRICKWAEEKNFDFFITADHGNAELTEDENGNPSTKHTTFPVMLISSDKTIKLKSGKLANIAPTILDYLGLDKHPDMDHDSLIIKDK.

Residues aspartate 18 and serine 68 each coordinate Mn(2+). Serine 68 functions as the Phosphoserine intermediate in the catalytic mechanism. Residues histidine 129, 159–160 (RD), arginine 191, arginine 197, 265–268 (RPDR), and lysine 338 each bind substrate. Mn(2+) contacts are provided by aspartate 403, histidine 407, aspartate 444, histidine 445, and histidine 462.

Belongs to the BPG-independent phosphoglycerate mutase family. In terms of assembly, monomer. The cofactor is Mn(2+).

It catalyses the reaction (2R)-2-phosphoglycerate = (2R)-3-phosphoglycerate. It participates in carbohydrate degradation; glycolysis; pyruvate from D-glyceraldehyde 3-phosphate: step 3/5. Catalyzes the interconversion of 2-phosphoglycerate and 3-phosphoglycerate. This is 2,3-bisphosphoglycerate-independent phosphoglycerate mutase from Mesomycoplasma hyopneumoniae (strain 232) (Mycoplasma hyopneumoniae).